An 81-amino-acid chain; its full sequence is Putative defensin-like protein 102 (81 aa).

Residues 1-24 (MTTTMKTFVAFVLTVFFIMSSAHC) form the signal peptide. Cystine bridges form between Cys43–Cys78, Cys49–Cys71, Cys57–Cys76, and Cys61–Cys77.

Belongs to the DEFL family.

It is found in the secreted. This Arabidopsis thaliana (Mouse-ear cress) protein is Putative defensin-like protein 102.